The primary structure comprises 306 residues: Dihydroorotate dehydrogenase B (NAD(+)), catalytic subunit (306 aa).

FMN is bound by residues Ser-24 and 48–49 (KA). Substrate is bound by residues Lys-48 and 72-76 (NAIGL). 2 residues coordinate FMN: Asn-102 and Asn-130. Asn-130 provides a ligand contact to substrate. Catalysis depends on Cys-133, which acts as the Nucleophile. Residues Lys-168 and Ile-194 each coordinate FMN. 195-196 (NT) contributes to the substrate binding site. Residues Gly-220, 246 to 247 (GG), and 268 to 269 (GT) each bind FMN.

Belongs to the dihydroorotate dehydrogenase family. Type 1 subfamily. As to quaternary structure, heterotetramer of 2 PyrK and 2 PyrD type B subunits. FMN is required as a cofactor.

The protein localises to the cytoplasm. The enzyme catalyses (S)-dihydroorotate + NAD(+) = orotate + NADH + H(+). It functions in the pathway pyrimidine metabolism; UMP biosynthesis via de novo pathway; orotate from (S)-dihydroorotate (NAD(+) route): step 1/1. Catalyzes the conversion of dihydroorotate to orotate with NAD(+) as electron acceptor. The protein is Dihydroorotate dehydrogenase B (NAD(+)), catalytic subunit (pyrD) of Malacoplasma penetrans (strain HF-2) (Mycoplasma penetrans).